A 389-amino-acid polypeptide reads, in one-letter code: WAT1-related protein At1g21890 (389 aa).

10 helical membrane passes run 13–33 (LAMI…MVSL), 40–60 (YVLA…FALF), 73–93 (IFLQ…NLYY), 102–122 (TFAS…AIIF), 142–162 (VITV…VDFI), 191–211 (WIPG…FFIL), 225–245 (LTTL…LVTV), 260–280 (FAAA…QGVV), 287–307 (VFVA…GVVV), and 312–332 (IHLG…TVVW). EamA domains follow at residues 23 to 150 (AGMY…GALL) and 205 to 331 (WAGF…YTVV). The disordered stretch occupies residues 339–361 (RMTDDDEDCKGLPIKSPVKPVDT).

Belongs to the drug/metabolite transporter (DMT) superfamily. Plant drug/metabolite exporter (P-DME) (TC 2.A.7.4) family.

It localises to the membrane. This Arabidopsis thaliana (Mouse-ear cress) protein is WAT1-related protein At1g21890.